Consider the following 211-residue polypeptide: Mitotic spindle assembly checkpoint protein MAD2B (211 aa).

Residues 13–203 (QVVADVLSEF…SDILKMQLYV (191 aa)) enclose the HORMA domain. The segment at 21–155 (EFLEVAVHLI…FTVLVHTREA (135 aa)) is mediates interaction with REV1 and REV3L and homodimerization.

In terms of assembly, homooligomer. Heterodimer with REV3L. This dimer forms the minimal DNA polymerase zeta complex (Pol-zeta2), with REV3L bearing DNA polymerase catalytic activity, although its activity is very low in this context. Component of the tetrameric Pol-zeta complex (Pol-zeta4), which consists of REV3L, MAD2L2, POLD2 and POLD3; Pol-zeta4 is the fully active form of DNA polymerase zeta. Component of the shieldin complex, consisting of SHLD1, SHLD2, SHLD3 and MAD2L2/REV7. Within the complex, SHLD2 forms a scaffold which interacts with a SHLD3-MAD2L2 subcomplex via its N-terminus, and with SHLD1 via its C-terminus. Interacts with REV1. Interacts with ADAM9. Interacts with CHAMP1. Interacts with FZR1 (in complex with the anaphase promoting complex APC). May interact with CDC20. Interacts with RAN. Interacts with ELK1; the interaction is direct and recruits MAD2L2 to ELK1-specific promoters. May interact with the JNK kinases MAPK8 and/or MAPK9 to stimulate ELK1 phosphorylation and transcriptional activity upon DNA damage. Interacts with TCF7L2; prevents its binding to promoters and negatively modulates its transcriptional activity. Interacts with YY1AP1. Interacts with PRCC; the interaction is direct. Interacts with POGZ. Interacts with ASTE1.

The protein localises to the nucleus. It localises to the cytoplasm. It is found in the cytoskeleton. The protein resides in the spindle. Functionally, adapter protein able to interact with different proteins and involved in different biological processes. Mediates the interaction between the error-prone DNA polymerase zeta catalytic subunit REV3L and the inserter polymerase REV1, thereby mediating the second polymerase switching in translesion DNA synthesis. Translesion DNA synthesis releases the replication blockade of replicative polymerases, stalled in presence of DNA lesions. Component of the shieldin complex, which plays an important role in repair of DNA double-stranded breaks (DSBs). During G1 and S phase of the cell cycle, the complex functions downstream of TP53BP1 to promote non-homologous end joining (NHEJ) and suppress DNA end resection. Mediates various NHEJ-dependent processes including immunoglobulin class-switch recombination, and fusion of unprotected telomeres. May also regulate another aspect of cellular response to DNA damage through regulation of the JNK-mediated phosphorylation and activation of the transcriptional activator ELK1. Inhibits the FZR1- and probably CDC20-mediated activation of the anaphase promoting complex APC thereby regulating progression through the cell cycle. Regulates TCF7L2-mediated gene transcription and may play a role in epithelial-mesenchymal transdifferentiation. This Rattus norvegicus (Rat) protein is Mitotic spindle assembly checkpoint protein MAD2B (Mad2l2).